Here is a 444-residue protein sequence, read N- to C-terminus: Protein EVI2B (444 aa).

The signal sequence occupies residues 1-23 (MEFKYLVFIVLCQYLDNTFFSET). The Extracellular portion of the chain corresponds to 24–203 (EAITTEQQSL…GTAHKNNHNA (180 aa)). N-linked (GlcNAc...) asparagine glycosylation is found at Asn63, Asn94, Asn104, and Asn127. Polar residues-rich tracts occupy residues 104-131 (NNSLPQTSPSGFTLTNQPSPSTYNSTGQ) and 160-171 (THNQPTKSTPTI). The tract at residues 104–197 (NNSLPQTSPS…EPPSGKGTAH (94 aa)) is disordered. A compositionally biased stretch (pro residues) spans 177–187 (TPPPPPPPLTS). Residues 204–224 (IAAILIGTIIISMLVAILMII) form a helical membrane-spanning segment. The Cytoplasmic portion of the chain corresponds to 225–444 (LWKYLRKPVL…SLPPPPTELL (220 aa)). Position 250 is a phosphothreonine (Thr250). Phosphoserine is present on residues Ser269, Ser272, Ser279, and Ser295. 2 stretches are compositionally biased toward polar residues: residues 318–332 (SEDSADGSTVGTAVS) and 361–370 (SPLPNDSINP). Disordered regions lie at residues 318-337 (SEDSADGSTVGTAVSSDDAD) and 361-444 (SPLP…TELL).

As to expression, expressed in myeloid and lymphoid progenitors and increased in mature hematopoietic populations with the highest levels in granulocytes.

It localises to the membrane. Its function is as follows. Required for granulocyte differentiation and functionality of hematopoietic progenitor cells through the control of cell cycle progression and survival of hematopoietic progenitor cells. The polypeptide is Protein EVI2B (Mus musculus (Mouse)).